The following is a 236-amino-acid chain: Sorulation-regulated protein 2 (236 aa).

Residues 1-20 (MLGLYLSSLFFAFFMAQVFA) form the signal peptide. N-linked (GlcNAc...) asparagine glycans are attached at residues N155, N160, N203, and N212. N212 carries GPI-anchor amidated asparagine lipidation. Positions 213–236 (SSSSLMPSMGILSFLFGLYLLLHP) are cleaved as a propeptide — removed in mature form.

Post-translationally, the GPI-anchor is attached to the protein in the endoplasmic reticulum and serves to target the protein to the cell surface. There, the glucosamine-inositol phospholipid moiety is cleaved off and the GPI-modified mannoprotein is covalently attached via its lipidless GPI glycan remnant to the 1,6-beta-glucan of the outer cell wall layer. N-glycosylated.

Its subcellular location is the spore wall. It is found in the secreted. The protein resides in the cell wall. It localises to the membrane. This chain is Sorulation-regulated protein 2, found in Saccharomyces cerevisiae (strain ATCC 204508 / S288c) (Baker's yeast).